A 201-amino-acid polypeptide reads, in one-letter code: Guanylyl cyclase-activating protein 1 (201 aa).

The N-myristoyl glycine moiety is linked to residue Gly-2. The residue at position 3 (Asn-3) is a Deamidated asparagine. EF-hand domains are found at residues 31–49 (SGQL…KNLS), 51–86 (SASQ…VLKG), 87–122 (KVEQ…IRAI), and 131–166 (TAEE…DQML). Residues Asp-64, Asn-66, Asp-68, Tyr-70, Glu-75, Asp-100, Asp-102, Asn-104, Cys-106, Glu-111, Asp-144, Asn-146, Asp-148, Glu-150, and Glu-155 each coordinate Ca(2+).

As to quaternary structure, homodimer. As to expression, in the retina, it is expressed in rod and cone photoreceptors.

Its subcellular location is the membrane. It localises to the photoreceptor inner segment. The protein localises to the cell projection. It is found in the cilium. The protein resides in the photoreceptor outer segment. Stimulates retinal guanylyl cyclase when free calcium ions concentration is low and inhibits guanylyl cyclase when free calcium ions concentration is elevated. This Ca(2+)-sensitive regulation of retinal guanylyl cyclase is a key event in recovery of the dark state of rod photoreceptors following light exposure. May be involved in cone photoreceptor light response and recovery of response in bright light. The sequence is that of Guanylyl cyclase-activating protein 1 (GUCA1A) from Homo sapiens (Human).